We begin with the raw amino-acid sequence, 231 residues long: NADH-ubiquinone oxidoreductase chain 4 (231 aa).

6 helical membrane passes run 1–21, 34–54, 63–85, 89–111, 128–148, and 156–176; these read PIAG…YGII, MFLP…LTCL, IAYS…TPWG, AMAL…NTTY, ILPM…ATPP, and LLIM…LGLS.

It belongs to the complex I subunit 4 family.

It localises to the mitochondrion membrane. It carries out the reaction a ubiquinone + NADH + 5 H(+)(in) = a ubiquinol + NAD(+) + 4 H(+)(out). In terms of biological role, core subunit of the mitochondrial membrane respiratory chain NADH dehydrogenase (Complex I) that is believed to belong to the minimal assembly required for catalysis. Complex I functions in the transfer of electrons from NADH to the respiratory chain. The immediate electron acceptor for the enzyme is believed to be ubiquinone. In Trimeresurus stejnegeri (Chinese green tree viper), this protein is NADH-ubiquinone oxidoreductase chain 4 (MT-ND4).